Consider the following 531-residue polypeptide: Light-independent protochlorophyllide reductase subunit B (531 aa).

Asp36 contributes to the [4Fe-4S] cluster binding site. Asp296 serves as the catalytic Proton donor. Position 431–432 (431–432 (GM)) interacts with substrate.

Belongs to the ChlB/BchB/BchZ family. Protochlorophyllide reductase is composed of three subunits; ChlL, ChlN and ChlB. Forms a heterotetramer of two ChlB and two ChlN subunits. It depends on [4Fe-4S] cluster as a cofactor.

Its subcellular location is the plastid. The protein resides in the chloroplast. The catalysed reaction is chlorophyllide a + oxidized 2[4Fe-4S]-[ferredoxin] + 2 ADP + 2 phosphate = protochlorophyllide a + reduced 2[4Fe-4S]-[ferredoxin] + 2 ATP + 2 H2O. It functions in the pathway porphyrin-containing compound metabolism; chlorophyll biosynthesis (light-independent). Functionally, component of the dark-operative protochlorophyllide reductase (DPOR) that uses Mg-ATP and reduced ferredoxin to reduce ring D of protochlorophyllide (Pchlide) to form chlorophyllide a (Chlide). This reaction is light-independent. The NB-protein (ChlN-ChlB) is the catalytic component of the complex. The sequence is that of Light-independent protochlorophyllide reductase subunit B from Nephroselmis olivacea (Green alga).